The sequence spans 61 residues: Large ribosomal subunit protein bL28 (61 aa).

This sequence belongs to the bacterial ribosomal protein bL28 family.

This chain is Large ribosomal subunit protein bL28, found in Geobacillus kaustophilus (strain HTA426).